The following is a 217-amino-acid chain: MEHSSWHALIKAQLPEGYFGKINQFMEQVYSQGIIYPPKEKVFQALLTTLLEEVKVVILGQDPYHGPGQAQGLSFSVPDSIPAPPSLQNILKELSDDIGVKKSHDLTSWAEQGVLLLNACLTVPAGQANGHAGQIWEPFTDAVIQVVNHLDRPVVFVLWGAYARKKKALVTNPHHLIIESAHPSPLSVYRGFWGSKPFSKANAFLKETGQEPIDWLR.

Asp-62 (proton acceptor) is an active-site residue.

It belongs to the uracil-DNA glycosylase (UDG) superfamily. UNG family.

Its subcellular location is the cytoplasm. It catalyses the reaction Hydrolyzes single-stranded DNA or mismatched double-stranded DNA and polynucleotides, releasing free uracil.. In terms of biological role, excises uracil residues from the DNA which can arise as a result of misincorporation of dUMP residues by DNA polymerase or due to deamination of cytosine. This is Uracil-DNA glycosylase from Streptococcus pneumoniae (strain P1031).